The following is an 89-amino-acid chain: Small ribosomal subunit protein bS20 (89 aa).

Residues 1–28 (MTLANIKSAKKRAIQSEKRRQHNASQRS) form a disordered region.

It belongs to the bacterial ribosomal protein bS20 family.

Functionally, binds directly to 16S ribosomal RNA. In Pasteurella multocida (strain Pm70), this protein is Small ribosomal subunit protein bS20.